Reading from the N-terminus, the 149-residue chain is Putative pre-16S rRNA nuclease (149 aa).

Belongs to the YqgF nuclease family.

The protein localises to the cytoplasm. In terms of biological role, could be a nuclease involved in processing of the 5'-end of pre-16S rRNA. This chain is Putative pre-16S rRNA nuclease, found in Burkholderia ambifaria (strain MC40-6).